A 184-amino-acid polypeptide reads, in one-letter code: Large ribosomal subunit protein uL18 (184 aa).

Belongs to the universal ribosomal protein uL18 family. As to quaternary structure, part of the 50S ribosomal subunit. Contacts the 5S and 23S rRNAs.

In terms of biological role, this is one of the proteins that bind and probably mediate the attachment of the 5S RNA into the large ribosomal subunit, where it forms part of the central protuberance. This chain is Large ribosomal subunit protein uL18 (rpl18), found in Haloferax volcanii (strain ATCC 29605 / DSM 3757 / JCM 8879 / NBRC 14742 / NCIMB 2012 / VKM B-1768 / DS2) (Halobacterium volcanii).